A 934-amino-acid chain; its full sequence is 3-hydroxy-3-methylglutaryl-coenzyme A reductase (934 aa).

Over 1-111 the chain is Lumenal; it reads MFYHGASANQ…VLNLVRGAET (111 aa). The helical transmembrane segment at 112-132 threads the bilayer; that stretch reads FDIALVTCAYIAMFYTLFNLF. Positions 113–280 constitute an SSD domain; that stretch reads DIALVTCAYI…STFLSAILSL (168 aa). Residues 133 to 141 lie on the Cytoplasmic side of the membrane; sequence ARMRAVGSK. A helical membrane pass occupies residues 142-162; the sequence is VWLGLSTLVSSFFAFLFALYI. The Lumenal segment spans residues 163–168; that stretch reads TTRVLD. Residues 169 to 189 form a helical membrane-spanning segment; sequence LSIPFLSLSEGIPFFVAVVGF. The Cytoplasmic segment spans residues 190-231; it reads NNKILLAEKVLQNQLNAQSSKNDAPTVLYQALREQGPLLLRD. A helical transmembrane segment spans residues 232-252; sequence HLFMITAFLGCSFYASYLDGL. Residues 253–256 lie on the Lumenal side of the membrane; it reads KNFC. The chain crosses the membrane as a helical span at residues 257-277; the sequence is ILAALILAFDILTTSTFLSAI. At 278-334 the chain is on the cytoplasmic side; the sequence is LSLKLEINQIHRSTLLREQLEDDGLTETTVDDVLKSNSLAGTKTFTDAPSTLVTVAK. A helical membrane pass occupies residues 335–355; the sequence is VAGVSVFFGLHFYGFGSAWLS. The Lumenal portion of the chain corresponds to 356–421; that stretch reads DLSAGNETND…GLISTAARDK (66 aa). 3 N-linked (GlcNAc...) asparagine glycosylation sites follow: asparagine 361, asparagine 364, and asparagine 382. A helical membrane pass occupies residues 422–442; that stretch reads YISKFILFAFAVSASINVYLL. Topologically, residues 443–934 are cytoplasmic; it reads NVARIHTTRL…MQHNRAAAKK (492 aa). The active-site Charge relay system is glutamate 618. 624–630 contacts CoA; it reads SAMRGCK. NADP(+) is bound by residues 685–687 and 712–720; these read SRF and DAMGMNMIS. Residue lysine 752 is the Charge relay system of the active site. Position 781–783 (781–783) interacts with CoA; that stretch reads VLK. Aspartate 828 (charge relay system) is an active-site residue. 923-924 is a binding site for CoA; that stretch reads SH. The active-site Proton donor is the histidine 924. 928-929 serves as a coordination point for NADP(+); it reads NR.

Belongs to the HMG-CoA reductase family.

The protein localises to the endoplasmic reticulum membrane. It catalyses the reaction (R)-mevalonate + 2 NADP(+) + CoA = (3S)-3-hydroxy-3-methylglutaryl-CoA + 2 NADPH + 2 H(+). It participates in metabolic intermediate biosynthesis; (R)-mevalonate biosynthesis; (R)-mevalonate from acetyl-CoA: step 3/3. HMG-CoA reductase; part of the first module of ergosterol biosynthesis pathway that includes the early steps of the pathway, conserved across all eukaryotes, and which results in the formation of mevalonate from acetyl-coenzyme A (acetyl-CoA). In this module, the cytosolic acetyl-CoA acetyltransferase catalyzes the formation of acetoacetyl-CoA. The hydroxymethylglutaryl-CoA synthase then condenses acetyl-CoA with acetoacetyl-CoA to form HMG-CoA. The rate-limiting step of the early module is the reduction to mevalonate by the 3-hydroxy-3-methylglutaryl-coenzyme A (HMG-CoA) reductase. This chain is 3-hydroxy-3-methylglutaryl-coenzyme A reductase, found in Cyberlindnera jadinii (Torula yeast).